The chain runs to 282 residues: Undecaprenyl-diphosphatase (282 aa).

7 helical membrane passes run 40–60, 89–109, 113–133, 150–170, 196–216, 230–250, and 258–278; these read GAAFTAIVQIGTLAAVLIYFM, WMIAAGTIPIVVFGLAFKDDI, LRSLYWVSAALIALALVLSIA, ISEITWLDAMIIGFAQAMALI, FSFLLSLPSVFAAGIYQLYKT, IAVATVFAFIFGYLSIAFLLT, and GIFIGYRLLLGISLIIMIGTG.

It belongs to the UppP family.

It localises to the cell inner membrane. It carries out the reaction di-trans,octa-cis-undecaprenyl diphosphate + H2O = di-trans,octa-cis-undecaprenyl phosphate + phosphate + H(+). Functionally, catalyzes the dephosphorylation of undecaprenyl diphosphate (UPP). Confers resistance to bacitracin. The polypeptide is Undecaprenyl-diphosphatase (Chlorobaculum parvum (strain DSM 263 / NCIMB 8327) (Chlorobium vibrioforme subsp. thiosulfatophilum)).